The chain runs to 655 residues: Bifunctional lysine-specific demethylase and histidyl-hydroxylase NO66 (655 aa).

Residues 1–16 (MEKVTNSAAAKPQGNN) are compositionally biased toward polar residues. Disordered stretches follow at residues 1-48 (MEKV…LSDM) and 67-122 (EDTD…QGAS). Low complexity predominate over residues 76–86 (STSSKEAAAAK). Basic and acidic residues predominate over residues 87–96 (TADHERRLQA). S131 is subject to Phosphoserine. The residue at position 137 (T137) is a Phosphothreonine. Residue S138 is modified to Phosphoserine. Residues 185-210 (KAPEEGNNNNDEKEMSTETSEPHKTD) are disordered. Residues 194-210 (NDEKEMSTETSEPHKTD) show a composition bias toward basic and acidic residues. Residues 307–452 (CSIRLLHASA…NLLETLMPMV (146 aa)) form the JmjC domain. H353, D355, and H418 together coordinate Fe cation.

It belongs to the ROX family. NO66 subfamily. Requires Fe(2+) as cofactor.

It localises to the nucleus. It catalyses the reaction N(6),N(6)-dimethyl-L-lysyl(36)-[histone H3] + 2 2-oxoglutarate + 2 O2 = L-lysyl(36)-[histone H3] + 2 formaldehyde + 2 succinate + 2 CO2. In terms of biological role, oxygenase that can act as both a histone lysine demethylase and a ribosomal histidine hydroxylase. Specifically demethylates 'Lys-4' (H3K4me) and 'Lys-36' (H3K36me) of histone H3, thereby playing a central role in histone code. This chain is Bifunctional lysine-specific demethylase and histidyl-hydroxylase NO66, found in Drosophila sechellia (Fruit fly).